A 396-amino-acid polypeptide reads, in one-letter code: 1-deoxy-D-xylulose 5-phosphate reductoisomerase (396 aa).

Thr17, Gly18, Ser19, Ile20, Asn47, and Asn130 together coordinate NADPH. Lys131 is a binding site for 1-deoxy-D-xylulose 5-phosphate. An NADPH-binding site is contributed by Glu132. Asp156 is a Mn(2+) binding site. Residues Ser157, Glu158, Ser182, and His205 each contribute to the 1-deoxy-D-xylulose 5-phosphate site. A Mn(2+)-binding site is contributed by Glu158. NADPH is bound at residue Gly211. The 1-deoxy-D-xylulose 5-phosphate site is built by Ser218, Asn223, Lys224, and Glu227. Glu227 lines the Mn(2+) pocket.

This sequence belongs to the DXR family. Mg(2+) serves as cofactor. Mn(2+) is required as a cofactor.

It carries out the reaction 2-C-methyl-D-erythritol 4-phosphate + NADP(+) = 1-deoxy-D-xylulose 5-phosphate + NADPH + H(+). It functions in the pathway isoprenoid biosynthesis; isopentenyl diphosphate biosynthesis via DXP pathway; isopentenyl diphosphate from 1-deoxy-D-xylulose 5-phosphate: step 1/6. Catalyzes the NADPH-dependent rearrangement and reduction of 1-deoxy-D-xylulose-5-phosphate (DXP) to 2-C-methyl-D-erythritol 4-phosphate (MEP). The polypeptide is 1-deoxy-D-xylulose 5-phosphate reductoisomerase (Rhizobium etli (strain ATCC 51251 / DSM 11541 / JCM 21823 / NBRC 15573 / CFN 42)).